The following is a 69-amino-acid chain: ATP synthase F(0) complex subunit e, mitochondrial (69 aa).

At Lys-34 the chain carries N6-acetyllysine.

It belongs to the ATPase e subunit family. Component of the ATP synthase complex composed at least of ATP5F1A/subunit alpha, ATP5F1B/subunit beta, ATP5MC1/subunit c (homooctomer), MT-ATP6/subunit a, MT-ATP8/subunit 8, ATP5ME/subunit e, ATP5MF/subunit f, ATP5MG/subunit g, ATP5MK/subunit k, ATP5MJ/subunit j, ATP5F1C/subunit gamma, ATP5F1D/subunit delta, ATP5F1E/subunit epsilon, ATP5PF/subunit F6, ATP5PB/subunit b, ATP5PD/subunit d, ATP5PO/subunit OSCP. ATP synthase complex consists of a soluble F(1) head domain (subunits alpha(3) and beta(3)) - the catalytic core - and a membrane F(0) domain - the membrane proton channel (subunits c, a, 8, e, f, g, k and j). These two domains are linked by a central stalk (subunits gamma, delta, and epsilon) rotating inside the F1 region and a stationary peripheral stalk (subunits F6, b, d, and OSCP).

The protein resides in the mitochondrion. It localises to the mitochondrion inner membrane. Its function is as follows. Subunit e, of the mitochondrial membrane ATP synthase complex (F(1)F(0) ATP synthase or Complex V) that produces ATP from ADP in the presence of a proton gradient across the membrane which is generated by electron transport complexes of the respiratory chain. ATP synthase complex consist of a soluble F(1) head domain - the catalytic core - and a membrane F(1) domain - the membrane proton channel. These two domains are linked by a central stalk rotating inside the F(1) region and a stationary peripheral stalk. During catalysis, ATP synthesis in the catalytic domain of F(1) is coupled via a rotary mechanism of the central stalk subunits to proton translocation. In vivo, can only synthesize ATP although its ATP hydrolase activity can be activated artificially in vitro. Part of the complex F(0) domain. The chain is ATP synthase F(0) complex subunit e, mitochondrial from Cricetulus longicaudatus (Long-tailed dwarf hamster).